Reading from the N-terminus, the 151-residue chain is Ribonuclease H (151 aa).

Residues 2-143 (SDDWVEIYTD…ADLLANRGVV (142 aa)) form the RNase H type-1 domain. Residues aspartate 11, glutamate 49, aspartate 71, and aspartate 135 each coordinate Mg(2+).

It belongs to the RNase H family. Monomer. Requires Mg(2+) as cofactor.

It localises to the cytoplasm. The catalysed reaction is Endonucleolytic cleavage to 5'-phosphomonoester.. Endonuclease that specifically degrades the RNA of RNA-DNA hybrids. The sequence is that of Ribonuclease H from Stutzerimonas stutzeri (strain A1501) (Pseudomonas stutzeri).